Here is a 210-residue protein sequence, read N- to C-terminus: uncharacterized protein (210 aa).

It localises to the mitochondrion. This is an uncharacterized protein from Schizosaccharomyces pombe (strain 972 / ATCC 24843) (Fission yeast).